Here is a 244-residue protein sequence, read N- to C-terminus: Dirigent protein 18 (244 aa).

Residues 1-25 (MMKQSPFSLLTSIFLIAALFTATTA) form the signal peptide.

This sequence belongs to the plant dirigent protein family. As to quaternary structure, homodimer.

Its subcellular location is the secreted. It is found in the extracellular space. The protein resides in the apoplast. Its function is as follows. Dirigent proteins impart stereoselectivity on the phenoxy radical-coupling reaction, yielding optically active lignans from two molecules of coniferyl alcohol in the biosynthesis of lignans, flavonolignans, and alkaloids and thus plays a central role in plant secondary metabolism. This chain is Dirigent protein 18 (DIR18), found in Arabidopsis thaliana (Mouse-ear cress).